A 343-amino-acid chain; its full sequence is Protein RecA (343 aa).

65–72 (GPESSGKT) lines the ATP pocket.

The protein belongs to the RecA family.

Its subcellular location is the cytoplasm. Can catalyze the hydrolysis of ATP in the presence of single-stranded DNA, the ATP-dependent uptake of single-stranded DNA by duplex DNA, and the ATP-dependent hybridization of homologous single-stranded DNAs. It interacts with LexA causing its activation and leading to its autocatalytic cleavage. The sequence is that of Protein RecA from Campylobacter jejuni subsp. doylei (strain ATCC BAA-1458 / RM4099 / 269.97).